Consider the following 254-residue polypeptide: Large ribosomal subunit protein uL2 (254 aa).

This sequence belongs to the universal ribosomal protein uL2 family.

This Eremothecium gossypii (strain ATCC 10895 / CBS 109.51 / FGSC 9923 / NRRL Y-1056) (Yeast) protein is Large ribosomal subunit protein uL2 (RPL2).